The sequence spans 93 residues: Small ribosomal subunit protein uS19 (93 aa).

Belongs to the universal ribosomal protein uS19 family.

In terms of biological role, protein S19 forms a complex with S13 that binds strongly to the 16S ribosomal RNA. This chain is Small ribosomal subunit protein uS19, found in Alkaliphilus oremlandii (strain OhILAs) (Clostridium oremlandii (strain OhILAs)).